Consider the following 651-residue polypeptide: Beta-glucuronidase (651 aa).

The N-terminal stretch at 1-22 (MLRGPAAVWAALGPLLWACGLA) is a signal peptide. Residues N172 and N419 are each glycosylated (N-linked (GlcNAc...) asparagine). E450 (proton donor) is an active-site residue. A glycan (N-linked (GlcNAc...) asparagine) is linked at N630.

The protein belongs to the glycosyl hydrolase 2 family. Homotetramer.

Its subcellular location is the lysosome. It catalyses the reaction a beta-D-glucuronoside + H2O = D-glucuronate + an alcohol. Its activity is regulated as follows. Inhibited by L-aspartic acid. Its function is as follows. Plays an important role in the degradation of dermatan and keratan sulfates. The sequence is that of Beta-glucuronidase (GUSB) from Felis catus (Cat).